A 224-amino-acid polypeptide reads, in one-letter code: GTP-binding protein RHO3 (224 aa).

Position 22–29 (22–29) interacts with GTP; sequence GDGACGKT. The short motif at 44 to 52 is the Effector region element; sequence YEPTVFENY. GTP is bound by residues 69-73 and 127-130; these read DTAGQ and LKCD. The tract at residues 205 to 224 is disordered; sequence TPKGARDSAPEAESSSCTIM. Cysteine methyl ester is present on Cys221. A lipid anchor (S-geranylgeranyl cysteine) is attached at Cys221. Residues 222 to 224 constitute a propeptide, removed in mature form; the sequence is TIM.

The protein belongs to the small GTPase superfamily. Rho family.

The protein localises to the cell membrane. In terms of biological role, involved in the regulation of actin polarization. Rho proteins are required for distinct steps during polarized hyphal growth of A.gossypii. This Eremothecium gossypii (strain ATCC 10895 / CBS 109.51 / FGSC 9923 / NRRL Y-1056) (Yeast) protein is GTP-binding protein RHO3 (RHO3).